The chain runs to 260 residues: Phytolongin Phyl2.1 (260 aa).

The region spanning 12-114 is the Longin domain; that stretch reads CIAKGTVILA…LDNPTQHCLQ (103 aa). Residues 231 to 251 traverse the membrane as a helical; Anchor for type IV membrane protein segment; it reads WIVLMFDLCICLVLFGIWLWI.

The protein belongs to the synaptobrevin family.

The protein localises to the membrane. Its function is as follows. Non-SNARE longin protein involved in membrane-trafficking machinery. This chain is Phytolongin Phyl2.1, found in Arabidopsis thaliana (Mouse-ear cress).